A 758-amino-acid polypeptide reads, in one-letter code: 5-methyltetrahydropteroyltriglutamate--homocysteine methyltransferase (758 aa).

Residues 16–19 (RELK) and Lys116 each bind 5-methyltetrahydropteroyltri-L-glutamate. L-homocysteine-binding positions include 436–438 (IGS) and Glu489. Residues 436–438 (IGS) and Glu489 each bind L-methionine. 5-methyltetrahydropteroyltri-L-glutamate is bound by residues 520 to 521 (RC) and Trp566. Residue Asp604 participates in L-homocysteine binding. Asp604 provides a ligand contact to L-methionine. Glu610 is a binding site for 5-methyltetrahydropteroyltri-L-glutamate. Residues His646, Cys648, and Glu670 each coordinate Zn(2+). The Proton donor role is filled by His699. Residue Cys731 coordinates Zn(2+).

Belongs to the vitamin-B12 independent methionine synthase family. The cofactor is Zn(2+).

It carries out the reaction 5-methyltetrahydropteroyltri-L-glutamate + L-homocysteine = tetrahydropteroyltri-L-glutamate + L-methionine. Its pathway is amino-acid biosynthesis; L-methionine biosynthesis via de novo pathway; L-methionine from L-homocysteine (MetE route): step 1/1. Its function is as follows. Catalyzes the transfer of a methyl group from 5-methyltetrahydrofolate to homocysteine resulting in methionine formation. The chain is 5-methyltetrahydropteroyltriglutamate--homocysteine methyltransferase from Xylella fastidiosa (strain M23).